We begin with the raw amino-acid sequence, 245 residues long: Uridylate kinase (245 aa).

Residue 13 to 16 coordinates ATP; it reads KLSG. A UMP-binding site is contributed by Gly56. Positions 57 and 61 each coordinate ATP. Residues Asp76 and 138-145 contribute to the UMP site; that span reads TGRPFFTT. 3 residues coordinate ATP: Asn166, Tyr172, and Asp175.

This sequence belongs to the UMP kinase family. In terms of assembly, homohexamer.

It localises to the cytoplasm. It carries out the reaction UMP + ATP = UDP + ADP. It functions in the pathway pyrimidine metabolism; CTP biosynthesis via de novo pathway; UDP from UMP (UMPK route): step 1/1. Inhibited by UTP. Catalyzes the reversible phosphorylation of UMP to UDP. The chain is Uridylate kinase from Mycoplasma mobile (strain ATCC 43663 / 163K / NCTC 11711) (Mesomycoplasma mobile).